Reading from the N-terminus, the 368-residue chain is Agmatine deiminase (368 aa).

C357 (amidino-cysteine intermediate) is an active-site residue.

The protein belongs to the agmatine deiminase family. Homodimer.

It catalyses the reaction agmatine + H2O = N-carbamoylputrescine + NH4(+). It functions in the pathway amine and polyamine biosynthesis; putrescine biosynthesis via agmatine pathway; N-carbamoylputrescine from agmatine: step 1/1. Functionally, mediates the hydrolysis of agmatine into N-carbamoylputrescine in the arginine decarboxylase (ADC) pathway of putrescine biosynthesis, a basic polyamine. This Stutzerimonas stutzeri (strain A1501) (Pseudomonas stutzeri) protein is Agmatine deiminase.